We begin with the raw amino-acid sequence, 608 residues long: Glutamine--fructose-6-phosphate aminotransferase [isomerizing] (608 aa).

The Nucleophile; for GATase activity role is filled by Cys2. A Glutamine amidotransferase type-2 domain is found at 2–217; it reads CGIVGIVGNQ…DGDWAVIGKT (216 aa). SIS domains follow at residues 281 to 422 and 456 to 598; these read ISDA…ARGT and LSRE…VDQP. The active-site For Fru-6P isomerization activity is Lys603.

In terms of assembly, homodimer.

The protein resides in the cytoplasm. It carries out the reaction D-fructose 6-phosphate + L-glutamine = D-glucosamine 6-phosphate + L-glutamate. Its function is as follows. Catalyzes the first step in hexosamine metabolism, converting fructose-6P into glucosamine-6P using glutamine as a nitrogen source. The sequence is that of Glutamine--fructose-6-phosphate aminotransferase [isomerizing] from Rhizobium meliloti (strain 1021) (Ensifer meliloti).